Reading from the N-terminus, the 111-residue chain is DNA-binding protein AF_2068 (111 aa).

It belongs to the PDCD5 family.

The chain is DNA-binding protein AF_2068 from Archaeoglobus fulgidus (strain ATCC 49558 / DSM 4304 / JCM 9628 / NBRC 100126 / VC-16).